Reading from the N-terminus, the 92-residue chain is DNA-directed RNA polymerase subunit Rpo11 (92 aa).

It belongs to the archaeal Rpo11/eukaryotic RPB11/RPC19 RNA polymerase subunit family. In terms of assembly, part of the RNA polymerase complex.

The protein localises to the cytoplasm. The enzyme catalyses RNA(n) + a ribonucleoside 5'-triphosphate = RNA(n+1) + diphosphate. Its function is as follows. DNA-dependent RNA polymerase (RNAP) catalyzes the transcription of DNA into RNA using the four ribonucleoside triphosphates as substrates. The chain is DNA-directed RNA polymerase subunit Rpo11 from Methanosarcina acetivorans (strain ATCC 35395 / DSM 2834 / JCM 12185 / C2A).